Consider the following 274-residue polypeptide: Large ribosomal subunit protein uL2 (274 aa).

The disordered stretch occupies residues 228 to 254 (VDHPMGGGEGRASGGHPRSRKGLYAKG). The segment covering 244-254 (PRSRKGLYAKG) has biased composition (basic residues).

This sequence belongs to the universal ribosomal protein uL2 family. As to quaternary structure, part of the 50S ribosomal subunit. Forms a bridge to the 30S subunit in the 70S ribosome.

One of the primary rRNA binding proteins. Required for association of the 30S and 50S subunits to form the 70S ribosome, for tRNA binding and peptide bond formation. It has been suggested to have peptidyltransferase activity; this is somewhat controversial. Makes several contacts with the 16S rRNA in the 70S ribosome. This chain is Large ribosomal subunit protein uL2, found in Azobacteroides pseudotrichonymphae genomovar. CFP2.